Here is a 319-residue protein sequence, read N- to C-terminus: Probable casein kinase II subunit alpha homolog (319 aa).

The 280-residue stretch at 37–316 folds into the Protein kinase domain; sequence YQIYQRMGRG…ADECLRHPLF (280 aa). Residues 43 to 51 and K64 contribute to the ATP site; that span reads MGRGKYSEV. The active-site Proton acceptor is the D151.

Belongs to the protein kinase superfamily. Ser/Thr protein kinase family. CK2 subfamily. In terms of assembly, tetramer composed of two alpha chains, one beta chain and one beta' chain.

It carries out the reaction L-seryl-[protein] + ATP = O-phospho-L-seryl-[protein] + ADP + H(+). The enzyme catalyses L-threonyl-[protein] + ATP = O-phospho-L-threonyl-[protein] + ADP + H(+). In terms of biological role, catalytic subunit of a constitutively active serine/threonine-protein kinase complex that phosphorylates a large number of substrates containing acidic residues C-terminal to the phosphorylated serine or threonine. In Encephalitozoon cuniculi (strain GB-M1) (Microsporidian parasite), this protein is Probable casein kinase II subunit alpha homolog (CKA1).